Here is a 548-residue protein sequence, read N- to C-terminus: MALTLLRGMRTPVSSGSNPGLFFAVLRPRLSRFTARAESAQATEPKAAPPPRSIQLATKEAAEQKTQGFEAVIGIETHVQLSTVTKAFCSCPYSYGAQPNSTVCPTCMGHPGTLPVLNEKVVECAVKLGLALNCEISMTSKFDRKQYFYPDLPKGYQISQFDIPIAKKGHVDLDLPVEFGGGHRKFGITRVHMEEDAGKLLHSESSSYSQVDLNRAGVPLLEIVSEPDMRTGIEAAEYGAELQRIVRYLGVSNGNMQEGSLRCDVNVSIRPVGQSEFGTKVEIKNMNSFSAINRAIDYEISRQILLHKEGQADQIVQETRLWDESSQKTFTMRKKEGLADYRYFPEPDLPEVVLTSDYINEISKSMPELPEAKRRRYENMGLSMQDVLFLANDDNIGHFYDSTLEHGADAKLAANWIMGDIAAYLKDEKVSIDEIKLTPLELSELIASIKNGTISGKIGKEILAELIAKGGTVKGVIEEKDLVQIADPAAIEAMVDKVIADNPKQLEQYRAGKTKLQGFFAGQVMKASKGKANPVLLNKILGEKLNAN.

It belongs to the GatB/GatE family. GatB subfamily. As to quaternary structure, subunit of the heterotrimeric GatCAB amidotransferase (AdT) complex, composed of A, B and C subunits.

It localises to the mitochondrion. It is found in the plastid. The protein localises to the chloroplast. It catalyses the reaction L-glutamyl-tRNA(Gln) + L-glutamine + ATP + H2O = L-glutaminyl-tRNA(Gln) + L-glutamate + ADP + phosphate + H(+). Allows the formation of correctly charged Gln-tRNA(Gln) through the transamidation of misacylated Glu-tRNA(Gln) in chloroplasts and mitochondria. The reaction takes place in the presence of glutamine and ATP through an activated gamma-phospho-Glu-tRNA(Gln). This Sorghum bicolor (Sorghum) protein is Glutamyl-tRNA(Gln) amidotransferase subunit B, chloroplastic/mitochondrial.